Reading from the N-terminus, the 494-residue chain is Serine/threonine-protein kinase PBL13 (494 aa).

Cysteine 4 carries S-palmitoyl cysteine lipidation. A Phosphothreonine modification is found at threonine 65. Residues 76–356 (FSSSNFLGEG…STVVSVLQDI (281 aa)) form the Protein kinase domain. ATP-binding positions include 82–90 (LGEGGFGPV) and lysine 111. Tyrosine 156 carries the phosphotyrosine modification. Aspartate 206 serves as the catalytic Proton acceptor. Serine 210 carries the phosphoserine modification. Serine 240 carries the phosphoserine; by autocatalysis modification. Residues threonine 241 and threonine 246 each carry the phosphothreonine modification. The residue at position 254 (tyrosine 254) is a Phosphotyrosine. Serine 321 carries the phosphoserine; by autocatalysis modification. A phosphothreonine; by autocatalysis mark is found at threonine 323 and threonine 383. Serine 384 bears the Phosphoserine; by autocatalysis mark. A phosphothreonine; by autocatalysis mark is found at threonine 395, threonine 398, threonine 406, threonine 413, threonine 421, and threonine 428. Serine 429 carries the phosphoserine; by autocatalysis modification. Residues 434-471 (DKTRREVKETSLQNFDKPRNVSTTDNHQKFRSPAHTAR) are disordered. Threonine 443 is subject to Phosphothreonine; by autocatalysis. A compositionally biased stretch (polar residues) spans 443 to 458 (TSLQNFDKPRNVSTTD). Phosphoserine; by autocatalysis occurs at positions 444 and 455. Threonine 456 is modified (phosphothreonine; by autocatalysis). Basic residues predominate over residues 462-471 (KFRSPAHTAR). Tyrosine 481 is subject to Phosphotyrosine; by autocatalysis.

This sequence belongs to the protein kinase superfamily. Ser/Thr protein kinase family. As to quaternary structure, interacts with RBHOD. Interaction is disrupted by flagellin-induced immune signaling.

The protein localises to the cell membrane. It catalyses the reaction L-seryl-[protein] + ATP = O-phospho-L-seryl-[protein] + ADP + H(+). The enzyme catalyses L-threonyl-[protein] + ATP = O-phospho-L-threonyl-[protein] + ADP + H(+). In terms of biological role, involved in defense responses. Acts as a negative regulator of plant immune responses. This Arabidopsis thaliana (Mouse-ear cress) protein is Serine/threonine-protein kinase PBL13.